Here is a 1244-residue protein sequence, read N- to C-terminus: Ras-specific guanine nucleotide-releasing factor 2 (1244 aa).

A PH 1 domain is found at 22–129 (EGTKRGYLSK…WVEAIQQASY (108 aa)). The stretch at 147 to 189 (VQIVETEKVAANQLRTQLEDQDTEIERLKAEIIALNKTKERMR) forms a coiled coil. Positions 201–230 (DIKKIKKVQSFMRGWLCRRKWKIIVQDYIC) constitute an IQ domain. The DH domain maps to 239–425 (KRNQIVFNMV…EELSRVMHDE (187 aa)). A PH 2 domain is found at 466–584 (PSVERGKLSK…WTSDISQCID (119 aa)). Residues 631-745 (KVPQIRYASV…PVRTRKLSLN (115 aa)) enclose the N-terminal Ras-GEF domain. Disordered regions lie at residues 704 to 743 (NRSGDHVNDKSPRLCRKFSSPPPLSISSRTSSPVRTRKLS), 759 to 814 (TTSS…NAEV), and 843 to 879 (PESPQASEPGEISPCRSPSTPRHLRYRQSGVQTAENS). Residues 706–715 (SGDHVNDKSP) are compositionally biased toward basic and acidic residues. The span at 728–743 (SISSRTSSPVRTRKLS) shows a compositional bias: polar residues. Low complexity-rich tracts occupy residues 759 to 774 (TTSSSAASSPTSANPT) and 781 to 806 (NNNNNSKPPLDLSRGQSPSSPEQSPG). One can recognise a Ras-GEF domain in the interval 1009-1241 (SAMEIAEQIT…YDLSLKIEPR (233 aa)).

Its subcellular location is the cytoplasm. It is found in the cell membrane. The protein resides in the endoplasmic reticulum membrane. Its function is as follows. Functions as a calcium-regulated nucleotide exchange factor activating both Ras and rac1 through the exchange of bound GDP for GTP. May function in synaptic plasticity. The polypeptide is Ras-specific guanine nucleotide-releasing factor 2 (rasgrf2) (Danio rerio (Zebrafish)).